A 166-amino-acid chain; its full sequence is ATP synthase subunit b (166 aa).

Residues 15 to 37 (TLYYLLIFAALLLLVKHFAWGPV) form a helical membrane-spanning segment.

Belongs to the ATPase B chain family. F-type ATPases have 2 components, F(1) - the catalytic core - and F(0) - the membrane proton channel. F(1) has five subunits: alpha(3), beta(3), gamma(1), delta(1), epsilon(1). F(0) has three main subunits: a(1), b(2) and c(10-14). The alpha and beta chains form an alternating ring which encloses part of the gamma chain. F(1) is attached to F(0) by a central stalk formed by the gamma and epsilon chains, while a peripheral stalk is formed by the delta and b chains.

Its subcellular location is the cell membrane. F(1)F(0) ATP synthase produces ATP from ADP in the presence of a proton or sodium gradient. F-type ATPases consist of two structural domains, F(1) containing the extramembraneous catalytic core and F(0) containing the membrane proton channel, linked together by a central stalk and a peripheral stalk. During catalysis, ATP synthesis in the catalytic domain of F(1) is coupled via a rotary mechanism of the central stalk subunits to proton translocation. In terms of biological role, component of the F(0) channel, it forms part of the peripheral stalk, linking F(1) to F(0). This is ATP synthase subunit b from Lactobacillus gasseri (strain ATCC 33323 / DSM 20243 / BCRC 14619 / CIP 102991 / JCM 1131 / KCTC 3163 / NCIMB 11718 / NCTC 13722 / AM63).